The sequence spans 240 residues: Vacuolar-sorting protein SNF7 (240 aa).

A Phosphothreonine modification is found at Thr-72. Phosphoserine occurs at positions 119 and 193. Residues 193–240 form a disordered region; sequence SENKVSLPSVPSNKIKQSENSVKDGEEEEDEEDEDEKALRELQAEMGL. Positions 195-212 are enriched in polar residues; it reads NKVSLPSVPSNKIKQSEN. Positions 217–228 are enriched in acidic residues; the sequence is GEEEEDEEDEDE. Lys-229 participates in a covalent cross-link: Glycyl lysine isopeptide (Lys-Gly) (interchain with G-Cter in ubiquitin). The span at 229–240 shows a compositional bias: basic and acidic residues; sequence KALRELQAEMGL.

This sequence belongs to the SNF7 family. As to quaternary structure, core component of the ESCRT-III complex (endosomal sorting required for transport complex III). ESCRT-III appears to be sequentially assembled as a flat lattice on the endosome membrane and forms a transient 450 kDa complex that contains DID4, oligomerized SNF7, VPS20 and VPS24. SNF7 polymerizes into spirals at the surface of lipid bilayers. SNF7 polymerization is nucleated by association of SNF7 with VPS20; the process is terminated through association of VPS24, possibly by capping the SNF7 filament. Interacts with VTA1; the interaction requires DID2. Interacts with BRO1. Interacts with DOA4. Interacts with HEH1 and HEH2. Interacts with RIM20 and YGR122W.

It is found in the cytoplasm. It localises to the endosome membrane. Its subcellular location is the nucleus envelope. Functionally, acts a component of the ESCRT-III complex required for the sorting and concentration of proteins resulting in the entry of these proteins into the invaginating vesicles of the multivesicular body (MVB). The sequential action of ESCRT-0, -I, and -II together with the ordered assembly of ESCRT-III links membrane invagination to cargo sorting. Membrane scission in the neck of the growing vesicle releases mature, cargo-laden ILVs into the lumen. ESCRT-III is critical for late steps in MVB sorting, such as membrane invagination and final cargo sorting and recruitment of late-acting components of the sorting machinery. SNF7 is the most abundant ESCRT-III subunit which forms membrane-sculpting filaments with 30 Angstrom periodicity and a exposed cationic membrane-binding surface. Its activation requires a prominent conformational rearrangement to expose protein-membrane and protein-protein interfaces. SNF7 filaments then form spirals that could function as spiral springs. The elastic expansion of compressed SNF7 spirals generates an area difference between the two sides of the membrane and thus curvature which could be the origin of membrane deformation leading eventually to fission. SNF7 recruits BRO1, which in turn recruits DOA4, which deubiquitinates cargos before their enclosure within MVB vesicles. ESCRT-III is also recruited to the nuclear envelope (NE) by integral INM proteins to surveil and clear defective nuclear pore complex (NPC) assembly intermediates to ensure the fidelity of NPC assembly. In Saccharomyces cerevisiae (strain ATCC 204508 / S288c) (Baker's yeast), this protein is Vacuolar-sorting protein SNF7.